The primary structure comprises 603 residues: MAKHIVELTDALSNKIAAGEVVERPASVVKELVENAIDAGSTVIDILVEEAGLNKITIIDNGSGIEEEDVAIAFLRHATSKIKNEADLFRVHTLGFRGEALPSIASVSHLTLETSTGETKGTTISLEGGKIIEQKSGHARKGTQIEVSQLFFNTPARLKYLKSLPTELGNITDILNRLALAHPDISFRFSHNGKPLLQTNGNGDLRQVIAAIYGVSIARKSIPVKAESLDFKISGYAVLPEVNRSNRNYISTIINGRFIKNFALVKAIQEGYHTLLPIGRFPIIVLQIEMDPIIVDVNVHPAKLEVRLSKEKELGQLISQMIKDAFHQLQLIPDGEVSKKQKEQQKSEQIQMSFEENRQPKEPPTLFSKPNIPEYVPSDEIVPKEDDFILETMPTYNPETQPEQVEEQKERIPKMYPIGQMHATYIFAQNENGLYIIDQHAAQERIKYEFYREKIGEVSRELQELLVPIVLEFPSDEYVRLEEQKAKLEEVGVFLENFGQNSFIIRAHPTWFPKDQEEEMLREIIDEALSAPSISIHKLREDTAIMMSCKKSIKANHYLTMQDMEALLDTLREASDPFTCPHGRPVIIQYSTYELEKMFKRVM.

Over residues 336 to 346 (EVSKKQKEQQK) the composition is skewed to basic and acidic residues. The disordered stretch occupies residues 336 to 372 (EVSKKQKEQQKSEQIQMSFEENRQPKEPPTLFSKPNI).

It belongs to the DNA mismatch repair MutL/HexB family.

In terms of biological role, this protein is involved in the repair of mismatches in DNA. It is required for dam-dependent methyl-directed DNA mismatch repair. May act as a 'molecular matchmaker', a protein that promotes the formation of a stable complex between two or more DNA-binding proteins in an ATP-dependent manner without itself being part of a final effector complex. The protein is DNA mismatch repair protein MutL of Listeria innocua serovar 6a (strain ATCC BAA-680 / CLIP 11262).